The following is a 621-amino-acid chain: Type 2 DNA topoisomerase 6 subunit B (621 aa).

Residues Asn-48, Asp-80, 101–102 (SR), 111–118 (GQQGIGIS), and Lys-435 contribute to the ATP site.

This sequence belongs to the TOP6B family. In terms of assembly, homodimer. Heterotetramer of two Top6A and two Top6B chains.

The enzyme catalyses ATP-dependent breakage, passage and rejoining of double-stranded DNA.. In terms of biological role, relaxes both positive and negative superturns and exhibits a strong decatenase activity. The protein is Type 2 DNA topoisomerase 6 subunit B of Methanosarcina barkeri (strain Fusaro / DSM 804).